The primary structure comprises 644 residues: Threonine--tRNA ligase (644 aa).

The region spanning 1-61 (MKVSIEGSVV…TACETLEPVY (61 aa)) is the TGS domain. The tract at residues 241–532 (DHRKLGTQLD…LTEHFAGAFP (292 aa)) is catalytic. Residues cysteine 333, histidine 384, and histidine 509 each coordinate Zn(2+).

The protein belongs to the class-II aminoacyl-tRNA synthetase family. As to quaternary structure, homodimer. The cofactor is Zn(2+).

It is found in the cytoplasm. The enzyme catalyses tRNA(Thr) + L-threonine + ATP = L-threonyl-tRNA(Thr) + AMP + diphosphate + H(+). Functionally, catalyzes the attachment of threonine to tRNA(Thr) in a two-step reaction: L-threonine is first activated by ATP to form Thr-AMP and then transferred to the acceptor end of tRNA(Thr). Also edits incorrectly charged L-seryl-tRNA(Thr). This Oleidesulfovibrio alaskensis (strain ATCC BAA-1058 / DSM 17464 / G20) (Desulfovibrio alaskensis) protein is Threonine--tRNA ligase.